Consider the following 87-residue polypeptide: Cytochrome c6 (87 aa).

The heme c site is built by C14, C17, H18, and M58.

This sequence belongs to the cytochrome c family. PetJ subfamily. In terms of assembly, monomer. In terms of processing, binds 1 heme c group covalently per subunit.

The protein localises to the cellular thylakoid lumen. In terms of biological role, functions as an electron carrier between membrane-bound cytochrome b6-f and photosystem I in oxygenic photosynthesis. This Aphanizomenon flos-aquae protein is Cytochrome c6 (petJ).